The sequence spans 483 residues: MDLFSEESPINEIGNMDMTDQQTQLCSSSFSHFLKHPKVQHFISTYSELVKMPTIRYVYFYYLFKKIGGFIGNEKIGTYFSKNVCNNIAAKGVPKLADVYKACEKMNLRQQSEICLLIEEVTRGQYLNSLWDALRDGTISSSKFYWATKKQNSTKKIFEPWPIKNDYYVAGPLAFGLRCEEVIKTVLNELICTPKQASCFDCGFMQSPLDGIFGVSLDYCTNVETNKDNLLVFHPDTEVYEIKSRFKYLFDKSECDTLYKKYKELYSNPCVKTLIKFIFSVSKPAIEFVPSGRLPSESDYLLAYDEEWNLRPTKKRKLNASHEMIKKCIEYNSYAGSQIYILSDPAENNGQITVKSKFKAGIFMNPRHTYFYQVALQHRVVQSYIGLSESPKSLGTQKNFIVSSFFRKRHFSDPPVCYVGKKQLEKTVEIPVFIIITPVYIPRSALLETISQAVNFWEESAKEAFTEYPWAPCALFANGDLTP.

It belongs to the herpesviridae alkaline nuclease family. In terms of assembly, forms a complex with the DNA polymerase, the DNA polymerase processivity factor, and the major DNA binding protein.

It localises to the host nucleus. Its subcellular location is the host cytoplasm. Its function is as follows. Plays a role in processing non linear or branched viral DNA intermediates in order to promote the production of mature packaged unit-length linear progeny viral DNA molecules. Exhibits endonuclease and exonuclease activities and accepts both double-stranded and single-stranded DNA as substrate. Exonuclease digestion of DNA is in the 5'-&gt; 3' direction and the products are 5'-monophosphate nucleosides. Additionally, forms a recombinase with the major DNA-binding protein, which displays strand exchange activity. Also acts as a cytoplasmic RNA endonuclease that induces degradation of the majority of the cellular messenger RNAs during early lytic infection. The resulting inhibition of cellular protein synthesis serves to ensure maximal viral gene expression and evasion from host immune response. Internally cleaves host mRNAs which are then degraded by the cellular exonuclease XRN1. Bypasses therefore the regulatory steps of deadenylation and decapping normally required for XRN1 activation. The protein is Shutoff alkaline exonuclease (37) of Saimiriine herpesvirus 2 (strain 11) (SaHV-2).